Consider the following 126-residue polypeptide: Glycine cleavage system H protein (126 aa).

The Lipoyl-binding domain maps to 22–104; that stretch reads KAYIGITSFA…YEQAWMIVVE (83 aa). N6-lipoyllysine is present on K63.

Belongs to the GcvH family. As to quaternary structure, the glycine cleavage system is composed of four proteins: P, T, L and H. (R)-lipoate is required as a cofactor.

The glycine cleavage system catalyzes the degradation of glycine. The H protein shuttles the methylamine group of glycine from the P protein to the T protein. Its function is as follows. Is also involved in protein lipoylation via its role as an octanoyl/lipoyl carrier protein intermediate. This Brevibacillus brevis (strain 47 / JCM 6285 / NBRC 100599) protein is Glycine cleavage system H protein.